The primary structure comprises 214 residues: MNTSISEIQRFLSMIAFEKELVSEDFSVVAGIDEAGRGPLAGPVVASACILPKGKVFPGVNDSKKLSPKQRAQVRDALMQDPEVCFGIGVISVERIDQVNILEATKEAMLQAISSLPISPDILLVDGLYLPHDIPCKKIIQGDAKSASIAAASILAKEHRDDLMLQLHRLYPEYGFDRHKGYGTSLHVEAIRRYGPSPCHRKSFSPIKQMCAIV.

One can recognise an RNase H type-2 domain in the interval Ser27–Val214. Residues Asp33, Glu34, and Asp126 each coordinate a divalent metal cation.

It belongs to the RNase HII family. Mn(2+) is required as a cofactor. Mg(2+) serves as cofactor.

It localises to the cytoplasm. It carries out the reaction Endonucleolytic cleavage to 5'-phosphomonoester.. Endonuclease that specifically degrades the RNA of RNA-DNA hybrids. The chain is Ribonuclease HII (rnhB) from Chlamydia pneumoniae (Chlamydophila pneumoniae).